A 196-amino-acid chain; its full sequence is Rho-related GTP-binding protein RhoB (196 aa).

12–19 (GDGACGKT) is a binding site for GTP. Tyr-34 carries an O-linked (GlcNAc) tyrosine; by Photorhabdus PAU_02230 glycan. Positions 34–42 (YVPTVFENY) match the Effector region motif. Thr-37 carries (Microbial infection) O-linked (Glc) threonine; by C.difficile toxins TcdA and TcdB glycosylation. ADP-ribosylasparagine; by botulinum toxin is present on Asn-41. GTP contacts are provided by residues 59–63 (DTAGQ) and 117–120 (NKKD). A Phosphotyrosine modification is found at Tyr-154. S-palmitoyl cysteine attachment occurs at residues Cys-189 and Cys-192. Cysteine methyl ester is present on Cys-193. The S-farnesyl cysteine; in plasma membrane form moiety is linked to residue Cys-193. Residue Cys-193 is the site of S-geranylgeranyl cysteine; in endosomal form attachment. The propeptide at 194 to 196 (KVL) is removed in mature form.

Belongs to the small GTPase superfamily. Rho family. Binds ROCK1 and ROCK2. Also binds PKN1/PRK1. Interacts with ARGGEF3. Interacts with RTKN. Interacts with AKAP13. Interacts with RIPOR1. In terms of processing, prenylation specifies the subcellular location of RHOB. The farnesylated form is localized to the plasma membrane while the geranylgeranylated form is localized to the endosome. Post-translationally, (Microbial infection) Glycosylated at Tyr-34 by Photorhabdus asymbiotica toxin PAU_02230. Mono-O-GlcNAcylation by PAU_02230 inhibits downstream signaling by an impaired interaction with diverse regulator and effector proteins of Rho and leads to actin disassembly. (Microbial infection) Glucosylated at Thr-37 by C.difficile toxins TcdA and TcdB in the colonic epithelium. Monoglucosylation completely prevents the recognition of the downstream effector, blocking the GTPases in their inactive form, leading to actin cytoskeleton disruption.

The protein resides in the late endosome membrane. It is found in the cell membrane. It localises to the nucleus. Its subcellular location is the cleavage furrow. Its function is as follows. Mediates apoptosis in neoplastically transformed cells after DNA damage. Not essential for development but affects cell adhesion and growth factor signaling in transformed cells. Plays a negative role in tumorigenesis as deletion causes tumor formation. Involved in intracellular protein trafficking of a number of proteins. Targets PKN1 to endosomes and is involved in trafficking of the EGF receptor from late endosomes to lysosomes. Also required for stability and nuclear trafficking of AKT1/AKT which promotes endothelial cell survival during vascular development. Serves as a microtubule-dependent signal that is required for the myosin contractile ring formation during cell cycle cytokinesis. Required for genotoxic stress-induced cell death in breast cancer cells. The polypeptide is Rho-related GTP-binding protein RhoB (RHOB) (Homo sapiens (Human)).